We begin with the raw amino-acid sequence, 397 residues long: Succinate--CoA ligase [ADP-forming] subunit beta (397 aa).

Residues 9–254 (KALLRQYGAP…ETEEDPKELA (246 aa)) form the ATP-grasp domain. ATP is bound by residues Lys46, 53-55 (GRG), Glu109, Ser112, and Glu117. Positions 209 and 223 each coordinate Mg(2+). Substrate is bound by residues Asn274 and 331–333 (GIM).

The protein belongs to the succinate/malate CoA ligase beta subunit family. In terms of assembly, heterotetramer of two alpha and two beta subunits. Requires Mg(2+) as cofactor.

It catalyses the reaction succinate + ATP + CoA = succinyl-CoA + ADP + phosphate. The catalysed reaction is GTP + succinate + CoA = succinyl-CoA + GDP + phosphate. Its pathway is carbohydrate metabolism; tricarboxylic acid cycle; succinate from succinyl-CoA (ligase route): step 1/1. Its function is as follows. Succinyl-CoA synthetase functions in the citric acid cycle (TCA), coupling the hydrolysis of succinyl-CoA to the synthesis of either ATP or GTP and thus represents the only step of substrate-level phosphorylation in the TCA. The beta subunit provides nucleotide specificity of the enzyme and binds the substrate succinate, while the binding sites for coenzyme A and phosphate are found in the alpha subunit. The sequence is that of Succinate--CoA ligase [ADP-forming] subunit beta from Paracoccus denitrificans (strain Pd 1222).